The chain runs to 577 residues: Heavy metal-associated isoprenylated plant protein 34 (577 aa).

The region spanning 9–72 (LQTCVLKVNV…KLSKSGKHAE (64 aa)) is the HMA domain. A metal cation contacts are provided by Cys-20 and Cys-23. The segment covering 77 to 87 (GGGGGGGGGKG) has biased composition (gly residues). Disordered regions lie at residues 77-136 (GGGG…QPMQ) and 150-451 (AAHG…GPGG). A compositionally biased stretch (low complexity) spans 97–106 (NLNMGGNNKP). Gly residues predominate over residues 118–129 (KAGGGGGGGQNH). The span at 168 to 177 (KDQKKSVKFA) shows a compositional bias: basic and acidic residues. Over residues 178–213 (DDEDDEFSEDDYDDEDFSEDDYDDDEFDDDEDDDDE) the composition is skewed to acidic residues. A compositionally biased stretch (low complexity) spans 227-244 (HMPPNKMMMPNKMMPQMG). Composition is skewed to gly residues over residues 245-254 (GHHGNGGGPK) and 266-281 (FKGG…GGGF). 2 stretches are compositionally biased toward basic and acidic residues: residues 294–326 (KNGK…KTDA) and 344–358 (NGDE…DGHG). 2 stretches are compositionally biased toward gly residues: residues 379–392 (KKGG…GHGG) and 420–451 (GIGG…GPGG). A Cysteine methyl ester modification is found at Cys-574. Cys-574 is lipidated: S-farnesyl cysteine. Residues 575 to 577 (SIM) constitute a propeptide, removed in mature form.

Belongs to the HIPP family.

Functionally, heavy-metal-binding protein. The protein is Heavy metal-associated isoprenylated plant protein 34 of Arabidopsis thaliana (Mouse-ear cress).